A 172-amino-acid polypeptide reads, in one-letter code: Putative phosphoesterase BT9727_1129 (172 aa).

The active-site Proton donor is histidine 34. 2 consecutive short sequence motifs (HXTX) follow at residues 34-37 and 115-118; these read HITL and HLTI. Histidine 115 serves as the catalytic Proton acceptor.

It belongs to the 2H phosphoesterase superfamily. YjcG family.

This Bacillus thuringiensis subsp. konkukian (strain 97-27) protein is Putative phosphoesterase BT9727_1129.